The primary structure comprises 350 residues: D-alanine--D-alanine ligase (350 aa).

Residues 134–337 (KIFAAQRGVK…LPKKHSIKVS (204 aa)) enclose the ATP-grasp domain. 160 to 212 (IAYPIILKPARLGSSIGVSVINEEKELDYGRDLAFEYDDTIIAESFKSGVKEY) is an ATP binding site. Mg(2+) is bound by residues Asp-289, Glu-301, and Asn-303.

This sequence belongs to the D-alanine--D-alanine ligase family. Mg(2+) is required as a cofactor. The cofactor is Mn(2+).

The protein localises to the cytoplasm. It carries out the reaction 2 D-alanine + ATP = D-alanyl-D-alanine + ADP + phosphate + H(+). Its pathway is cell wall biogenesis; peptidoglycan biosynthesis. Its function is as follows. Cell wall formation. This Helicobacter hepaticus (strain ATCC 51449 / 3B1) protein is D-alanine--D-alanine ligase.